The sequence spans 103 residues: Small ribosomal subunit protein uS10 (103 aa).

Belongs to the universal ribosomal protein uS10 family. In terms of assembly, part of the 30S ribosomal subunit.

Its function is as follows. Involved in the binding of tRNA to the ribosomes. The chain is Small ribosomal subunit protein uS10 from Acinetobacter baumannii (strain AB307-0294).